The sequence spans 115 residues: MTRVKRGNVARKRRKKILKITKGFRGSSSTLFRTANQQQMKALRYSYRDRLTRKRNFRALWIVRINAMARHLGLNYNQFINNITKAQIIINRKTLSQLAIYDSTIFSSLISIKNN.

It belongs to the bacterial ribosomal protein bL20 family.

The protein resides in the plastid. It localises to the chloroplast. Binds directly to 23S ribosomal RNA and is necessary for the in vitro assembly process of the 50S ribosomal subunit. It is not involved in the protein synthesizing functions of that subunit. In Pleurastrum terricola (Filamentous green alga), this protein is Large ribosomal subunit protein bL20c.